We begin with the raw amino-acid sequence, 270 residues long: FKBP-type peptidyl-prolyl cis-trans isomerase FkpA (270 aa).

An N-terminal signal peptide occupies residues 1-25 (MKSLFKVTLLATTMAVALHAPITFA). A PPIase FKBP-type domain is found at 164 to 249 (SDTVVVNYKG…VFDVELLDVK (86 aa)).

The protein belongs to the FKBP-type PPIase family.

The protein localises to the periplasm. The catalysed reaction is [protein]-peptidylproline (omega=180) = [protein]-peptidylproline (omega=0). Its function is as follows. PPIases accelerate the folding of proteins. It catalyzes the cis-trans isomerization of proline imidic peptide bonds in oligopeptides. The polypeptide is FKBP-type peptidyl-prolyl cis-trans isomerase FkpA (fkpA) (Escherichia coli (strain K12)).